Reading from the N-terminus, the 55-residue chain is Trypsin inhibitor (55 aa).

A Kazal-like domain is found at 1–55 (AHMDCTEFNPLCRCNKMLGDLICAVIGDAKEEHRNMCALCCEHPGGFEYSNGPCE). Disulfide bonds link Cys-5–Cys-40, Cys-12–Cys-41, Cys-14–Cys-37, and Cys-23–Cys-54.

The protein resides in the secreted. Potent inhibitor of trypsin. This chain is Trypsin inhibitor, found in Halocynthia roretzi (Sea squirt).